The primary structure comprises 834 residues: Periplasmic nitrate reductase (834 aa).

Residues 1–29 (MKLSRREFAKANAAAIAAAAAGLPLASTA) constitute a signal peptide (tat-type signal). Residues 41–97 (LDWNKAPCRFCGTGCSVMVATRDNRVVATHGDVKAEVNRGLNCVKGYFLSKIMYGVD) enclose the 4Fe-4S Mo/W bis-MGD-type domain. [4Fe-4S] cluster is bound by residues Cys-48, Cys-51, Cys-55, and Cys-83. Mo-bis(molybdopterin guanine dinucleotide) contacts are provided by residues Lys-85, Gln-152, Asn-177, Cys-181, 214–221 (WGSNMAEM), 245–249 (STFEH), 264–266 (QTD), Met-375, Gln-379, Asn-485, 511–512 (SD), Lys-534, Asp-561, and 721–730 (TGRVLEHWHT). Phe-797 lines the substrate pocket. 2 residues coordinate Mo-bis(molybdopterin guanine dinucleotide): Asn-805 and Lys-822.

It belongs to the prokaryotic molybdopterin-containing oxidoreductase family. NasA/NapA/NarB subfamily. In terms of assembly, component of the periplasmic nitrate reductase NapAB complex composed of NapA and NapB. [4Fe-4S] cluster is required as a cofactor. It depends on Mo-bis(molybdopterin guanine dinucleotide) as a cofactor. Predicted to be exported by the Tat system. The position of the signal peptide cleavage has not been experimentally proven.

It localises to the periplasm. It catalyses the reaction 2 Fe(II)-[cytochrome] + nitrate + 2 H(+) = 2 Fe(III)-[cytochrome] + nitrite + H2O. In terms of biological role, catalytic subunit of the periplasmic nitrate reductase complex NapAB. Receives electrons from NapB and catalyzes the reduction of nitrate to nitrite. This Ectopseudomonas mendocina (strain ymp) (Pseudomonas mendocina) protein is Periplasmic nitrate reductase.